A 64-amino-acid polypeptide reads, in one-letter code: uncharacterized protein (64 aa).

The protein resides in the host cytoplasm. This is an uncharacterized protein from Enterobacteriaceae (Bacteriophage Mu).